Consider the following 1801-residue polypeptide: MSEILCQWLNQELKVSRTVSPKSFAKTFSNGYLIGEVLFKFELQSDFSEFSESRVSTAKLNNFSRLQPTLHLLGVQFDQNVAQSIITEKPGAATKLLYQLYIALQKKKKTGLTGLEIQTMQPQTNQRLQALKSEAFRERLKNLIPRQTDFNLMRVTCRFQEKCKQMKEDLARMHFEKFEKIQKLEEEQRHFNIEKQRLNRRRQNEIMAKIQAAIIQIPKPEPNRTLKAIEAQKLMKKKKEAEDVANEIKKFEALIKKDLQTRESISKTSLDTIDQTAAELLNTYSDDDYIKKIQKRLEEDAFAREQREKRRRRLLMDQLIAHEAQEEAYREEQLIHRLMRQSQQERRIAVQLMHVRHEKEVLWQNRIFREKQFEERRLKDFQDALDREAALTKQAKIDFAEQTLRAKEIHEKIAMERAQQRYEKHYGICAEILDQILDLCTKVADYRLLTNNLIPHKMMRDWKELFFSGNPIYEQTSHTHGQTESTEDHHVELNKRNLLDSKDYEDYKNMTGEWALPEDMANSSPPSNNNILGHVLLRLIENSYPSEKEVADTELPSFAVKGCLLGKTLSGKTTILKALQNDIPIQVLSIDTLVQEAIQAFNDGEKSSKAPSMHEDVKGDPEVDQKEMIIPQDKNELTDTQVPGEAAPQKEGTKSSDFEQFRPSNSFLSLSMRAQLGAKSELMLRRGKSVPDVLLVNILVNAIKKIPVNQSWVLDGFPMTVNQAKLLEEALTGYKRKSLQLKKKKAQMPTLALSPTTSKEVPFLPSAFDFAILLDISDNSSLARINDIIAKEISHEISHENVSGPTITSSEEKSEDRNLRDHIQHRIVGFLDNWPLLEEWFTEPRNILKKVNAEIDEAFLCQKIKEIFATEVSNKKIKVEKKLEEKETEKKSAVSPTEPPTPTPPLASEAEKEKEVHQAKPSGKGKTQSVSPKGKAQGGKISVKKSPIDSTEVSPTLIAMPTTKPGSEEWVYVTEPIPEELPSFLVPYWELIEKTYISHIKTVLRQLRESQHTVLSYLYETRTSFQEFLRRPDHKQDFVSQWQADFNSVPEDLWEDEETKAELHQRVNDLRDRLWDICEARKEEAEQERLDIINESWLQDYIGITMNHFFSLMQAEVNRFQDTKRLLQDYYRAMESRIPLEDNKKFTRIPLVQLDGKEISEHQLRIPLVPRISSSPENVSMRPKVKALLKGRFDPPLESLEANFEGDEKIVLDTWQQASLAISQMVAAEVHQRLAEEEKEQPQLDPKEKSPQSGTNKKAKKEKEQAKKEKEQAKKEKEQAKKEKEPPKKKMAEKKGKGKSSPVVEVSPVTITPEEMAEMERKNELKLKIKEEHLAALQTEEQATQFRLELIKSKALSILEDLVTKVIEVYRFMEKWLGKRYLNEMASIQKLTEVARYHIETATKIQNEIYLSQEDFYINGDIKVFPDPPPPTRPPPVEKEENGTLTIEQLDNLRDQFLDMAPKGIIGNKAFTDILLDLVTLNLGTNNLSSSWMHLTQLDLQEITSLLTVNTEFVDWRKFLMVAAMPWPIPLEEELLETLQRFKATDEAQTGTITFEQYKQAGLWFSGDEDIKIPENPLEPLPFNRQEHLIEFFFRLFADSEKDPPQLDYTQMLLYFACHPDTLEGVYRALSVAVGTHIFRQVETPMLTAEKTSISSVSPNEEFPEAEENSTREELKEEKDERDQKEEEIPENANTEKISMETLLKVFGGGNEVLDANRFASYLKTENIYSENLIKTFQDLGAKNLEPIEVNILLKHPYIQDLITNYVDYKIPDIKMILQRSEHAQGSDGERSPSRLTDEKK.

Residues 1–105 enclose the Calponin-homology (CH) domain; that stretch reads MSEILCQWLN…LLYQLYIALQ (105 aa). Coiled-coil stretches lie at residues 176–260 and 321–395; these read EKFE…KDLQ and AHEA…TKQA. Positions 632–659 are disordered; it reads QDKNELTDTQVPGEAAPQKEGTKSSDFE. 2 coiled-coil regions span residues 722 to 748 and 869 to 895; these read NQAK…KAQM and ATEV…SAVS. Composition is skewed to basic and acidic residues over residues 883–892 and 909–918; these read LEEKETEKKS and EAEKEKEVHQ. The segment at 883 to 949 is disordered; it reads LEEKETEKKS…KISVKKSPID (67 aa). A coiled-coil region spans residues 1051 to 1077; it reads EDLWEDEETKAELHQRVNDLRDRLWDI. Composition is skewed to basic and acidic residues over residues 1233 to 1250 and 1261 to 1295; these read RLAE…KEKS and KEKE…AEKK. Disordered regions lie at residues 1233-1304, 1651-1695, and 1781-1801; these read RLAE…SPVV, KTSI…NANT, and SEHA…DEKK. The stretch at 1252-1286 forms a coiled coil; it reads QSGTNKKAKKEKEQAKKEKEQAKKEKEQAKKEKEP. The interval 1305-1657 is interaction with IFT20; it reads EVSPVTITPE…TAEKTSISSV (353 aa). Positions 1665-1695 form a coiled coil; sequence EAEENSTREELKEEKDERDQKEEEIPENANT. Basic and acidic residues predominate over residues 1669-1687; the sequence is NSTREELKEEKDERDQKEE.

As to quaternary structure, interacts (via C-terminus) with IFT20. Interacts with DYNC1I2. Predominantly expressed in ciliated tissues such as lung, trachea, testis, brain, and at lower levels in kidney and spleen.

Its subcellular location is the cell projection. It is found in the cilium. The protein resides in the flagellum. The protein localises to the cytoplasm. It localises to the golgi apparatus. Required for correct axoneme development in spermatozoa. Important for normal development of the manchette and sperm head morphology. Essential for male fertility. Plays a role in localization of the intraflagellar transport protein IFT20 to the manchette, suggesting function as an adapter for dynein-mediated protein transport during spermatogenesis. Also plays a role in bone growth where it seems to be required for normal osteoblast differentiation. The chain is Sperm flagellar protein 2 (Spef2) from Rattus norvegicus (Rat).